We begin with the raw amino-acid sequence, 228 residues long: E3 ubiquitin-protein ligase RNF114 (228 aa).

The RING-type zinc finger occupies 29–68 (CPVCLEVYEKPVQVPCGHVFCSACLQECLKPKKPVCGVCR). The Zn(2+) site is built by Cys91 and Cys94. The C2HC RNF-type zinc-finger motif lies at 91-110 (CHGCRKNFFLSKIRSHVATC). Lys102 carries the post-translational modification N6-acetyllysine. Positions 106 and 110 each coordinate Zn(2+). An N6-acetyllysine modification is found at Lys112.

As to quaternary structure, interacts with XAF1, the interaction increases XAF1 stability and proapoptotic effects, and may regulate IFN signaling. In terms of processing, autoubiquitinated. Polyubiquitinated in the presence of E2 enzymes UBE2D1, UBE2D2 and UBE2D3, but only monoubiquitinated in the presence of UBE2E1. Expressed in numerous tissues, including skin, CD4 lymphocytes and dendritic cells. Highest levels in testis.

Its subcellular location is the cytoplasm. It is found in the nucleus. The catalysed reaction is S-ubiquitinyl-[E2 ubiquitin-conjugating enzyme]-L-cysteine + [acceptor protein]-L-lysine = [E2 ubiquitin-conjugating enzyme]-L-cysteine + N(6)-ubiquitinyl-[acceptor protein]-L-lysine.. It participates in protein modification; protein ubiquitination. Functionally, E3 ubiquitin-protein ligase that promotes the ubiquitination of various substrates. In turn, participates in the regulation of many biological processes including cell cycle, apoptosis, osteoclastogenesis as well as innate or adaptive immunity. Acts as a negative regulator of NF-kappa-B-dependent transcription by promoting the ubiquitination and stabilization of the NF-kappa-B inhibitor TNFAIP3. May promote the ubiquitination of TRAF6 as well. Also acts as a negative regulator of T-cell activation. Inhibits cellular dsRNA responses and interferon production by targeting MAVS component for proteasomal degradation. Ubiquitinates the CDK inhibitor CDKN1A leading to its degradationand probably also CDKN1B and CDKN1C. This activity stimulates cell cycle G1-to-S phase transition and suppresses cellular senescence. May play a role in spermatogenesis. The protein is E3 ubiquitin-protein ligase RNF114 (RNF114) of Homo sapiens (Human).